The chain runs to 364 residues: DNA replication and repair protein RecF (364 aa).

30 to 37 (GENGSGKT) lines the ATP pocket.

This sequence belongs to the RecF family.

Its subcellular location is the cytoplasm. Functionally, the RecF protein is involved in DNA metabolism; it is required for DNA replication and normal SOS inducibility. RecF binds preferentially to single-stranded, linear DNA. It also seems to bind ATP. The protein is DNA replication and repair protein RecF of Xylella fastidiosa (strain M12).